The following is a 512-amino-acid chain: Acid-sensing ion channel 2 (512 aa).

The Cytoplasmic segment spans residues 1-37; the sequence is MDLKESPSEGSLQPSSIQIFANTSTLHGIRHIFVYGP. Phosphoserine is present on residues Ser-8 and Ser-11. A helical membrane pass occupies residues 38-58; it reads LTIRRVLWAVAFVGSLGLLLV. Residues 59–427 lie on the Extracellular side of the membrane; it reads ESSERVSYYF…EQKKAYEVAA (369 aa). Disulfide bonds link Cys-92–Cys-193, Cys-289–Cys-364, Cys-307–Cys-360, Cys-311–Cys-358, Cys-320–Cys-342, and Cys-322–Cys-334. Residues Asn-365 and Asn-392 are each glycosylated (N-linked (GlcNAc...) asparagine). The chain crosses the membrane as a helical span at residues 428 to 448; sequence LLGDIGGQMGLFIGASLLTIL. Residues 441–443 carry the GAS motif; ion selectivity filter motif; that stretch reads GAS. At 449–512 the chain is on the cytoplasmic side; the sequence is ELFDYIYELI…ALGTLEEIAC (64 aa).

This sequence belongs to the amiloride-sensitive sodium channel (TC 1.A.6) family. ASIC2 subfamily. Can form homotrimers. Heterotrimer; forms functional heterotrimers producing channel with different properties. Forms heterotrimers with ASIC1; while ASIC1 determines current amplitude, ASIC2 influences the properties of the current. Forms heterotrimers with ASIC3; resulting in channels with distinct properties. Interacts with STOM; STOM regulates the gating of ASIC2-containing channels. Interacts with PICK1; promotes ASIC3 phosphorylation by PKC and activation of ASIC2/ASIC3 heterotrimers. In terms of tissue distribution, expressed in sciatic nerve and dorsal root ganglion (DRG) (at protein level). Both isoforms display the same expression pattern except in DRG where isoform 2 is more abundantly expressed. Widely distributed throughout the brain. Highly expressed in the main olfactory bulb, neo- and allo-cortical regions, hippocampal formation, habenula, basolateral amygdaloid nuclei, and cerebellum. In the olfactory system, expressed in the glomerular cell layer, the internal granular layer, and the mitral and internal plexiform cell layers. Within the glomerular layer, restricted to the periglomerular cells. In the neocortex, strongly expressed in the large pyramidal neurons in all cortical layers as well as in the oligo-, astro-, or micro-glia cells. In the hippocampal formation, expressed in dentate granule cells and hilar neurons, as well as in pyramidal cells of CA1-CA3 subfields. Expressed in stratum oriens and radiatum of all subfields. Within the thalamus, expressed moderately in the medial and lateral habenula. In the cerebellar cortex expressed in Purkinje cells and granule cells. Expressed at low levels in choroid plexus.

Its subcellular location is the cell membrane. The catalysed reaction is Na(+)(in) = Na(+)(out). The enzyme catalyses K(+)(in) = K(+)(out). It carries out the reaction Li(+)(in) = Li(+)(out). With respect to regulation, inhibited by the diuretic drug amiloride. Inhibited by gadolinium ions, the heterotrimer with ASIC3 being more sensitive. Zn(2+) potentiates the acid activation of ASIC2-containing homomeric and heteromeric channels. The snake venom mambalgin-1 and mambalgin-2 inhibit the homotrimers composed of ASIC1 and ASIC2 and have strong analgesic effects. Its function is as follows. Forms pH-gated trimeric sodium channels that act as postsynaptic excitatory sensors in the nervous system. Upon extracellular acidification, these channels generate rapid, transient inward currents that fully desensitize. Highly selective for sodium, they are permeable to other cations. By forming heterotrimeric channels with ASIC1, could contribute to synaptic plasticity, learning, and memory. Additionally, as acid sensors at nerve terminals, plays a role in mechanosensation and phototransduction. Has no pH-gated sodium channel activity per se but can associate with other ASICs to produce functional channels with specific properties. This is Acid-sensing ion channel 2 from Rattus norvegicus (Rat).